The primary structure comprises 448 residues: Beta-glucosidase B (448 aa).

Glutamate 167 serves as the catalytic Proton donor. Residue glutamate 356 is the Nucleophile of the active site.

Belongs to the glycosyl hydrolase 1 family.

The catalysed reaction is Hydrolysis of terminal, non-reducing beta-D-glucosyl residues with release of beta-D-glucose.. In Paenibacillus polymyxa (Bacillus polymyxa), this protein is Beta-glucosidase B (bglB).